A 393-amino-acid chain; its full sequence is METFLFTSESVNEGHPDKLCDQISDAVLDACLAQDPDSKVACETCTKTNMVMVFGEITTKADVDYEQIVRKTCREIGFISDDVGLDADHCKVLVNIEQQSPDIAQGVHGHFTKRPEEIGAGDQGHMFGYATDETLELMPKCHVLATKLGAKLTEVRKNGTCPWLRPHGKTQVTVEYRNDNGAMVPERVHTVLISTQHDETVPNDEIAPDLKEHVIKPVIPEKYLDENTIFHLNPSGRFVIGGPHGDAGLTGRKIIIDTYGGWGAHGGGAFSGKDPTKVDRSGAYIVRQAAKSIVANGLARRCIVQVSYAIGVPEPLSLFVDTYGTGSIPDKEILEIIKEHFDFRPGMISINLDLKRGGNGRSQKTAAYGHFGRDDPDFTWETVKPLKWEKAQA.

Residue Glu9 participates in Mg(2+) binding. ATP is bound at residue His15. Position 43 (Glu43) interacts with K(+). Positions 56 and 99 each coordinate L-methionine. ATP-binding positions include 167–169, 235–238, Asp246, 252–253, Ala269, Lys273, and Lys277; these read HGK, SGRF, and RK. Asp246 contacts L-methionine. Lys277 is an L-methionine binding site.

The protein belongs to the AdoMet synthase family. As to quaternary structure, homotetramer. The cofactor is Mn(2+). Mg(2+) serves as cofactor. Co(2+) is required as a cofactor. Requires K(+) as cofactor. In terms of tissue distribution, root.

Its subcellular location is the cytoplasm. The catalysed reaction is L-methionine + ATP + H2O = S-adenosyl-L-methionine + phosphate + diphosphate. It functions in the pathway amino-acid biosynthesis; S-adenosyl-L-methionine biosynthesis; S-adenosyl-L-methionine from L-methionine: step 1/1. In terms of biological role, catalyzes the formation of S-adenosylmethionine from methionine and ATP. The reaction comprises two steps that are both catalyzed by the same enzyme: formation of S-adenosylmethionine (AdoMet) and triphosphate, and subsequent hydrolysis of the triphosphate. The polypeptide is S-adenosylmethionine synthase (METK) (Pinus banksiana (Jack pine)).